We begin with the raw amino-acid sequence, 567 residues long: Urease subunit alpha (567 aa).

A Urease domain is found at 129-567; sequence GGVDTHIHWI…LPMAQRYFLF (439 aa). Ni(2+) is bound by residues His134, His136, and Lys217. The residue at position 217 (Lys217) is an N6-carboxylysine. His219 contacts substrate. Ni(2+) contacts are provided by His246 and His272. His320 functions as the Proton donor in the catalytic mechanism. Asp360 is a binding site for Ni(2+).

It belongs to the metallo-dependent hydrolases superfamily. Urease alpha subunit family. In terms of assembly, heterotrimer of UreA (gamma), UreB (beta) and UreC (alpha) subunits. Three heterotrimers associate to form the active enzyme. Ni cation serves as cofactor. Carboxylation allows a single lysine to coordinate two nickel ions.

It localises to the cytoplasm. It catalyses the reaction urea + 2 H2O + H(+) = hydrogencarbonate + 2 NH4(+). Its pathway is nitrogen metabolism; urea degradation; CO(2) and NH(3) from urea (urease route): step 1/1. This is Urease subunit alpha from Citrobacter koseri (strain ATCC BAA-895 / CDC 4225-83 / SGSC4696).